We begin with the raw amino-acid sequence, 437 residues long: Coiled-coil domain-containing protein 78 (437 aa).

3 coiled-coil regions span residues 83–114 (HLREQHEAEVFELRREILRLESRVLELELHGN), 147–287 (EELK…QRQE), and 360–408 (QRLQ…YKQE).

This sequence belongs to the CCDC78 family.

Its subcellular location is the cytoplasm. The protein resides in the cytoskeleton. It is found in the microtubule organizing center. It localises to the centrosome. The protein localises to the centriole. Its subcellular location is the perinuclear region. The protein resides in the cell membrane. It is found in the sarcolemma. It localises to the sarcoplasmic reticulum. In terms of biological role, component of the deuterosome, a structure that promotes de novo centriole amplification in multiciliated cells that can generate more than 100 centrioles. Deuterosome-mediated centriole amplification occurs in terminally differentiated multiciliated cells (G1/0) and not in S phase. Essential for centriole amplification and is required for CEP152 localization to the deuterosome. In Mus musculus (Mouse), this protein is Coiled-coil domain-containing protein 78 (Ccdc78).